Reading from the N-terminus, the 302-residue chain is Zygote arrest protein 2.S (302 aa).

3 disordered regions span residues 15–46 (YGGN…SEPP), 88–117 (VDTG…PTDC), and 138–195 (LPQG…EPNK). The span at 159–178 (LKDRGPSPEEKEPETKEALE) shows a compositional bias: basic and acidic residues. Residues 203 to 288 (QKYGYFHCKD…QELCGRCKNK (86 aa)) form a 3CxxC-type zinc finger.

This sequence belongs to the ZAR1 family. In terms of tissue distribution, oocyte-specific.

It is found in the cytoplasm. The protein resides in the cytoplasmic ribonucleoprotein granule. Functionally, mRNA-binding protein required for maternal mRNA storage, translation and degradation during oocyte maturation. Probably promotes formation of some phase-separated membraneless compartment that stores maternal mRNAs in oocytes: acts by undergoing liquid-liquid phase separation upon binding to maternal mRNAs. Binds to the 3'-UTR of maternal mRNAs, inhibiting their translation. The protein is Zygote arrest protein 2.S of Xenopus laevis (African clawed frog).